Here is a 281-residue protein sequence, read N- to C-terminus: Putative thiosulfate sulfurtransferase (281 aa).

2 Rhodanese domains span residues 18 to 125 and 154 to 274; these read NTDG…ELTK and AIGN…VPIE. The active-site Cysteine persulfide intermediate is the Cys233. Arg238 is a substrate binding site.

The enzyme catalyses thiosulfate + hydrogen cyanide = thiocyanate + sulfite + 2 H(+). May be a sulfotransferase involved in the formation of thiosulfate. The protein is Putative thiosulfate sulfurtransferase (cysA) of Saccharopolyspora erythraea (Streptomyces erythraeus).